Reading from the N-terminus, the 266-residue chain is Glutamate racemase (266 aa).

Residues 7-8 (DS) and 39-40 (YG) contribute to the substrate site. The Proton donor/acceptor role is filled by Cys70. 71-72 (NT) lines the substrate pocket. Cys186 functions as the Proton donor/acceptor in the catalytic mechanism. 187-188 (TH) is a binding site for substrate.

The protein belongs to the aspartate/glutamate racemases family.

The catalysed reaction is L-glutamate = D-glutamate. It participates in cell wall biogenesis; peptidoglycan biosynthesis. Provides the (R)-glutamate required for cell wall biosynthesis. The sequence is that of Glutamate racemase from Campylobacter curvus (strain 525.92).